We begin with the raw amino-acid sequence, 338 residues long: Galaxin (338 aa).

Residues 1 to 23 (MKPSGAFLSLCVVLLSLATHCFS) form the signal peptide. Basic and acidic residues predominate over residues 30–47 (RRDAHSDTNALKSRDRRQ). Positions 30–50 (RRDAHSDTNALKSRDRRQAPA) are disordered.

In terms of tissue distribution, component of the acid-insoluble organic matrix of the aragonitic skeleton (at protein level). Initially, expressed in an aboral submarginal ring and then along calcifying septa.

The protein localises to the secreted. In Acropora millepora (Staghorn coral), this protein is Galaxin.